The chain runs to 637 residues: MAAAPPLTKAEYLKRYLSGTDAGLEGGPEAGRKRRKKRPKPGGAGGKGMRIVDDDVGWAAISTAKPEKEEEEDGDLPVVAEFVDERPEEVKQMEAFRSSAKWKLLGGHGEDGHFHHDDQDSSPPRRVRHDTPDTSPPRKARHDTPDPSPPRKARHDTPDTSPPRKARHDTPDPSPPRKARHDTPDPSPPRRVRHDTPDLSPPRRVRHDTPDLSPPRRVRHDTPDPSPPRRVRHDLDASPPRKSHRNSSAVSPRRGHHGSLGTSSPRQTHNHSPTAAQHRRTLDSSGTQHLRRAHHESPDLELHKAKSSKAAERAPSKAASQSGLGPSHPSLSTNSKYEHDSDLSPPRKRQAKAHFEAKKQLDSKGVYQKASDSDLSPPRKKKNSGHQDSDSDLSPPRNRPRRQSSDSDLSPPRRRQRTKSSDSDLSPPRRSPRPGKKTAHMYSGAKTGLVTDVQREHQELKKQDQDTTDLGAQFEFTETVFRDKSGRKRNLKLERLEQRRKAEKDSERDELYAQWGKGLAQSRQQQQNVEDAMKEMQKPLARYIDDEDLDRMLREQEREGDPMANFIKKNKAKENKNKKVKPRYSGPAPPPNRFNIWPGYRWDGVDRSNGFEQKRFARLASKKAVEELAYKWSVEDM.

The tract at residues 18 to 53 is disordered; that stretch reads SGTDAGLEGGPEAGRKRRKKRPKPGGAGGKGMRIVD. Residue K65 forms a Glycyl lysine isopeptide (Lys-Gly) (interchain with G-Cter in SUMO2) linkage. The interval 104-470 is disordered; the sequence is LLGGHGEDGH…KKQDQDTTDL (367 aa). The segment covering 108 to 119 has biased composition (basic and acidic residues); the sequence is HGEDGHFHHDDQ. T131 carries the phosphothreonine modification. S135 is subject to Phosphoserine. A Phosphothreonine modification is found at T144. A Phosphoserine modification is found at S148. Residue T157 is modified to Phosphothreonine. Residue S161 is modified to Phosphoserine. T170 bears the Phosphothreonine mark. At S174 the chain carries Phosphoserine. The residue at position 183 (T183) is a Phosphothreonine. Phosphoserine is present on S187. Residues T196 and T209 each carry the phosphothreonine modification. A Phosphoserine modification is found at S213. The residue at position 222 (T222) is a Phosphothreonine. Phosphoserine is present on residues S226, S238, S259, S264, S272, S284, S285, and S297. The span at 260–275 shows a compositional bias: polar residues; that stretch reads LGTSSPRQTHNHSPTA. Residues 295-315 are compositionally biased toward basic and acidic residues; that stretch reads HESPDLELHKAKSSKAAERAP. Residues 318–335 are compositionally biased toward polar residues; that stretch reads AASQSGLGPSHPSLSTNS. S341 and S344 each carry phosphoserine. A compositionally biased stretch (basic and acidic residues) spans 353 to 362; the sequence is AHFEAKKQLD. Residues S371, S373, S376, S410, and S426 each carry the phosphoserine modification. The span at 430–439 shows a compositional bias: basic residues; that stretch reads RSPRPGKKTA. Residues 453–465 are compositionally biased toward basic and acidic residues; the sequence is VQREHQELKKQDQ. The stretch at 490–538 forms a coiled coil; the sequence is NLKLERLEQRRKAEKDSERDELYAQWGKGLAQSRQQQQNVEDAMKEMQK. Y512 bears the Phosphotyrosine mark. Residues 553–595 form a disordered region; sequence LREQEREGDPMANFIKKNKAKENKNKKVKPRYSGPAPPPNRFN. Phosphoserine is present on S585.

This sequence belongs to the CWC26 family. As to quaternary structure, part of the activated spliceosome B/catalytic step 1 spliceosome, one of the forms of the spliceosome which has a well-formed active site but still cannot catalyze the branching reaction and is composed of at least 52 proteins, the U2, U5 and U6 snRNAs and the pre-mRNA. Component of the minor spliceosome, which splices U12-type introns.

Its subcellular location is the nucleus. In terms of biological role, involved in pre-mRNA splicing as component of the activated spliceosome. As a component of the minor spliceosome, involved in the splicing of U12-type introns in pre-mRNAs. This is BUD13 homolog (Bud13) from Mus musculus (Mouse).